The sequence spans 156 residues: Small ribosomal subunit protein uS7 (156 aa).

It belongs to the universal ribosomal protein uS7 family. Part of the 30S ribosomal subunit. Contacts proteins S9 and S11.

One of the primary rRNA binding proteins, it binds directly to 16S rRNA where it nucleates assembly of the head domain of the 30S subunit. Is located at the subunit interface close to the decoding center, probably blocks exit of the E-site tRNA. This chain is Small ribosomal subunit protein uS7, found in Nostoc punctiforme (strain ATCC 29133 / PCC 73102).